A 742-amino-acid polypeptide reads, in one-letter code: UPF0313 protein MA_4618 (742 aa).

The segment at 1–125 (MGVRKQTMVK…SFSSSLPASK (125 aa)) is disordered. The interval 1 to 128 (MGVRKQTMVK…SSLPASKFLP (128 aa)) is unknown. 2 stretches are compositionally biased toward basic and acidic residues: residues 17 to 40 (ENKK…ERAG) and 49 to 73 (KKVE…KAEG). Basic residues predominate over residues 106–115 (TGKKEKKQKK). Positions 129–742 (MSPEEVKARG…KCLIRRKEKQ (614 aa)) are UPF0313. One can recognise a Radical SAM core domain in the interval 438–707 (ALEMVKFSLT…AMQRALMHYR (270 aa)). Residues Cys452, Cys456, and Cys459 each coordinate [4Fe-4S] cluster.

This sequence in the C-terminal section; belongs to the UPF0313 family. Requires [4Fe-4S] cluster as cofactor.

The sequence is that of UPF0313 protein MA_4618 from Methanosarcina acetivorans (strain ATCC 35395 / DSM 2834 / JCM 12185 / C2A).